The primary structure comprises 346 residues: Cell shape-determining protein MreC (346 aa).

A coiled-coil region spans residues 89–118; that stretch reads NRRLKAELAEMRQWRDRALALQDQNDRFKS. The tract at residues 292–346 is disordered; it reads SLPPVTTEDPQTSILSNPVSRPVAPTPSPATATPSAAPAARPATTATPPQTGAPR. Positions 299-308 are enriched in polar residues; sequence EDPQTSILSN. Residues 309 to 340 are compositionally biased toward low complexity; it reads PVSRPVAPTPSPATATPSAAPAARPATTATPP.

It belongs to the MreC family. In terms of assembly, interacts with penicillin-binding proteins (PBP2, PBP1a, PBP1b, PBP2a and PBP2b). Interacts with outer membrane proteins belonging to the TonB-dependent receptor family of transport proteins.

It localises to the periplasm. Its function is as follows. Involved in formation and maintenance of cell shape. Required for the spatial organization of components of the peptidoglycan-synthesizing holoenzyme in the periplasm and peptidoglycan synthetic activity. In Caulobacter vibrioides (strain NA1000 / CB15N) (Caulobacter crescentus), this protein is Cell shape-determining protein MreC.